We begin with the raw amino-acid sequence, 200 residues long: dITP/XTP pyrophosphatase (200 aa).

7 to 12 (SNNRGK) serves as a coordination point for substrate. The active-site Proton acceptor is Asp68. Asp68 contributes to the Mg(2+) binding site. Substrate contacts are provided by residues Ala69, 154–157 (FGFD), Lys177, and 182–183 (HR).

It belongs to the HAM1 NTPase family. Homodimer. Mg(2+) is required as a cofactor.

The enzyme catalyses XTP + H2O = XMP + diphosphate + H(+). The catalysed reaction is dITP + H2O = dIMP + diphosphate + H(+). It carries out the reaction ITP + H2O = IMP + diphosphate + H(+). Its function is as follows. Pyrophosphatase that catalyzes the hydrolysis of nucleoside triphosphates to their monophosphate derivatives, with a high preference for the non-canonical purine nucleotides XTP (xanthosine triphosphate), dITP (deoxyinosine triphosphate) and ITP. Seems to function as a house-cleaning enzyme that removes non-canonical purine nucleotides from the nucleotide pool, thus preventing their incorporation into DNA/RNA and avoiding chromosomal lesions. This is dITP/XTP pyrophosphatase from Delftia acidovorans (strain DSM 14801 / SPH-1).